Reading from the N-terminus, the 482-residue chain is Proline--tRNA ligase (482 aa).

3 residues coordinate L-proline: Thr117, Glu119, and Arg148. ATP-binding residues include Arg148, Glu150, Gln232, and Thr235. His237 serves as a coordination point for L-proline. ATP is bound at residue Ser269. An interaction with tRNA region spans residues Glu346–Lys376. Zn(2+) contacts are provided by Cys436, Cys441, Cys464, and Cys467.

Belongs to the class-II aminoacyl-tRNA synthetase family. ProS type 3 subfamily. Homodimer. The dimer is functionally asymmetric: only one of the two active sites at a time is able to form prolyl-adenylate, and only one tRNA molecule binds per dimer. Interacts with LeuRS, which enhances tRNA(Pro) aminoacylation.

It is found in the cytoplasm. The enzyme catalyses tRNA(Pro) + L-proline + ATP = L-prolyl-tRNA(Pro) + AMP + diphosphate. Its function is as follows. Catalyzes the attachment of proline to tRNA(Pro) in a two-step reaction: proline is first activated by ATP to form Pro-AMP and then transferred to the acceptor end of tRNA(Pro). Can inadvertently accommodate and process cysteine. In Methanothermobacter thermautotrophicus (strain ATCC 29096 / DSM 1053 / JCM 10044 / NBRC 100330 / Delta H) (Methanobacterium thermoautotrophicum), this protein is Proline--tRNA ligase (proS).